Consider the following 465-residue polypeptide: Glutamyl-tRNA reductase 2 (465 aa).

Residues 62-65 (TCNR), serine 122, 127-129 (EGQ), and glutamine 133 contribute to the substrate site. Cysteine 63 serves as the catalytic Nucleophile. NADP(+) is bound at residue 204-209 (GAGKMG).

Belongs to the glutamyl-tRNA reductase family.

The protein localises to the plastid. The protein resides in the chloroplast. The enzyme catalyses (S)-4-amino-5-oxopentanoate + tRNA(Glu) + NADP(+) = L-glutamyl-tRNA(Glu) + NADPH + H(+). It functions in the pathway porphyrin-containing compound metabolism; protoporphyrin-IX biosynthesis; 5-aminolevulinate from L-glutamyl-tRNA(Glu): step 1/2. Its function is as follows. Catalyzes the NADPH-dependent reduction of glutamyl-tRNA(Glu) to glutamate 1-semialdehyde (GSA). This chain is Glutamyl-tRNA reductase 2 (HEMA2), found in Hordeum vulgare (Barley).